A 360-amino-acid polypeptide reads, in one-letter code: G-protein coupled receptor 15 (360 aa).

Residues 1-33 (MDPEETSVYLDYYYATSPNPDIRETHSHVPYTS) lie on the Extracellular side of the membrane. The helical transmembrane segment at 34-54 (VFLPVFYIAVFLTGVLGNLVL) threads the bilayer. Residues 55 to 69 (MGALHFKPGSRRLID) are Cytoplasmic-facing. A helical membrane pass occupies residues 70–90 (IFIINLAASDFIFLVTLPLWV). The Extracellular portion of the chain corresponds to 91–120 (DKEASLGLWRTGSFLCKGSSYMISVNMHCS). Residues 121–141 (VFLLTCMSVDRYLAIVCPVVS) form a helical membrane-spanning segment. Topologically, residues 142–149 (RKFRRTDC) are cytoplasmic. The chain crosses the membrane as a helical span at residues 150-170 (AYVVCASIWFISCLLGLPTLL). Over 171 to 192 (SRELTLIDDKPYCAEKKATPLK) the chain is Extracellular. Residues 193–213 (LIWSLVALIFTFFVPLLSIVT) form a helical membrane-spanning segment. Residues 214–239 (CYCRIARKLCAHYQQSGKHNKKLKKS) lie on the Cytoplasmic side of the membrane. Residues 240–260 (IKIIFIVVAAFLVSWLPFNTS) form a helical membrane-spanning segment. The Extracellular segment spans residues 261-284 (KLLAIVSGLQQERYFPSAILQLGM). The chain crosses the membrane as a helical span at residues 285–305 (EVSGPLAFANSCVNPFIYYIF). Over 306 to 360 (DSYIRRAIVHCLCPCLKNYDFGSSTETSDSHLTKALSTFIHAEDFTRRRKRSVSL) the chain is Cytoplasmic. A Phosphoserine modification is found at serine 359.

It belongs to the G-protein coupled receptor 1 family. As to quaternary structure, interacts with adapter YWHAE; this interaction promotes ER-to-Golgi transport of GPR15. In terms of processing, phosphorylation is necessary for YWHAE binding and efficient surface expression. Post-translationally, O-glycosylated. Sialylated O-glycans in the N-terminal tail inhibits binding of GPR15LG. Sulfation is required for efficient binding of GPR15LG.

The protein localises to the cell membrane. Its function is as follows. G protein-coupled receptor that plays an important role in immune homeostasis. Acts via its natural ligand GPR15LG, a chemokine-like polypeptide strongly expressed in gastrointestinal tissues. GPR15-GPR15LG signaling axis regulates intestinal homeostasis and inflammation through the migration of immune cells. Controls thereby the specific homing of T-cells, particularly FOXP3+ regulatory T-cells (Tregs), to the large intestine lamina propria. Also required for skin localization of thymus-derived dendritic epidermal T-cells. Plays an important role in mediating cytoprotective function as well as angiogenesis of thrombomodulin. Mechanistically, preferentially signals through the Gi/o pathway to inhibit adenylate cyclase activity and activate a phosphatidylinositol-calcium second messenger system that regulates the release of Ca(2+) ions from intracellular stores. This Chlorocebus aethiops (Green monkey) protein is G-protein coupled receptor 15 (GPR15).